The chain runs to 389 residues: Phospho-N-acetylmuramoyl-pentapeptide-transferase (389 aa).

10 helical membrane-spanning segments follow: residues 25–45 (RAVM…PFVI), 74–94 (MGGV…ADWG), 97–117 (FIWI…VDDY), 134–154 (FFWQ…SVSE), 190–210 (ISYP…IVGS), 222–242 (GLVI…AYVM), 259–279 (AGEL…FLWF), 286–306 (VFMG…IAVI), 311–331 (IVLF…MLQV), and 366–386 (QVVV…LSTL).

It belongs to the glycosyltransferase 4 family. MraY subfamily. Mg(2+) is required as a cofactor.

It localises to the cell inner membrane. The catalysed reaction is UDP-N-acetyl-alpha-D-muramoyl-L-alanyl-gamma-D-glutamyl-meso-2,6-diaminopimeloyl-D-alanyl-D-alanine + di-trans,octa-cis-undecaprenyl phosphate = di-trans,octa-cis-undecaprenyl diphospho-N-acetyl-alpha-D-muramoyl-L-alanyl-D-glutamyl-meso-2,6-diaminopimeloyl-D-alanyl-D-alanine + UMP. It functions in the pathway cell wall biogenesis; peptidoglycan biosynthesis. Catalyzes the initial step of the lipid cycle reactions in the biosynthesis of the cell wall peptidoglycan: transfers peptidoglycan precursor phospho-MurNAc-pentapeptide from UDP-MurNAc-pentapeptide onto the lipid carrier undecaprenyl phosphate, yielding undecaprenyl-pyrophosphoryl-MurNAc-pentapeptide, known as lipid I. In Ralstonia pickettii (strain 12J), this protein is Phospho-N-acetylmuramoyl-pentapeptide-transferase.